Reading from the N-terminus, the 180-residue chain is Cytidylate kinase (180 aa).

7–15 is an ATP binding site; it reads GLPGSGTTT.

The protein belongs to the cytidylate kinase family. Type 2 subfamily.

It localises to the cytoplasm. It carries out the reaction CMP + ATP = CDP + ADP. The enzyme catalyses dCMP + ATP = dCDP + ADP. This chain is Cytidylate kinase, found in Methanosarcina acetivorans (strain ATCC 35395 / DSM 2834 / JCM 12185 / C2A).